Here is a 95-residue protein sequence, read N- to C-terminus: Protein TusB (95 aa).

The protein belongs to the DsrH/TusB family. As to quaternary structure, heterohexamer, formed by a dimer of trimers. The hexameric TusBCD complex contains 2 copies each of TusB, TusC and TusD. The TusBCD complex interacts with TusE.

The protein resides in the cytoplasm. Functionally, part of a sulfur-relay system required for 2-thiolation of 5-methylaminomethyl-2-thiouridine (mnm(5)s(2)U) at tRNA wobble positions. This Escherichia coli O81 (strain ED1a) protein is Protein TusB.